Here is a 424-residue protein sequence, read N- to C-terminus: Arginine biosynthesis bifunctional protein ArgJ (424 aa).

Residues threonine 172, lysine 198, threonine 209, glutamate 296, asparagine 419, and serine 424 each contribute to the substrate site. Catalysis depends on threonine 209, which acts as the Nucleophile.

This sequence belongs to the ArgJ family. Heterotetramer of two alpha and two beta chains.

Its subcellular location is the cytoplasm. The catalysed reaction is N(2)-acetyl-L-ornithine + L-glutamate = N-acetyl-L-glutamate + L-ornithine. The enzyme catalyses L-glutamate + acetyl-CoA = N-acetyl-L-glutamate + CoA + H(+). It functions in the pathway amino-acid biosynthesis; L-arginine biosynthesis; L-ornithine and N-acetyl-L-glutamate from L-glutamate and N(2)-acetyl-L-ornithine (cyclic): step 1/1. The protein operates within amino-acid biosynthesis; L-arginine biosynthesis; N(2)-acetyl-L-ornithine from L-glutamate: step 1/4. Catalyzes two activities which are involved in the cyclic version of arginine biosynthesis: the synthesis of N-acetylglutamate from glutamate and acetyl-CoA as the acetyl donor, and of ornithine by transacetylation between N(2)-acetylornithine and glutamate. The protein is Arginine biosynthesis bifunctional protein ArgJ of Gluconobacter oxydans (strain 621H) (Gluconobacter suboxydans).